Consider the following 116-residue polypeptide: UPF0482 protein PC1_2049 (116 aa).

The first 31 residues, 1–31, serve as a signal peptide directing secretion; that stretch reads MNHYSFSSLIRAFIPLSLVIVSAAWQPAALA.

Belongs to the UPF0482 family.

The sequence is that of UPF0482 protein PC1_2049 from Pectobacterium carotovorum subsp. carotovorum (strain PC1).